Consider the following 288-residue polypeptide: Protein shisa-2 (288 aa).

The N-terminal stretch at 1-23 (MWLEGSPLAVLAAVSFLLSVLAA) is a signal peptide. Residues 24 to 110 (AQGSGEYCHG…DSTAVPIYVP (87 aa)) lie on the Extracellular side of the membrane. The helical transmembrane segment at 111–131 (FLIVGSVFVAFIIVGSLVAIC) threads the bilayer. The Cytoplasmic portion of the chain corresponds to 132–288 (CCRCLRPKQE…EQMMYPAVTV (157 aa)). Residues 161-188 (SSASTSRGSSSRQSSTAASSSSSANSGA) are compositionally biased toward low complexity. The tract at residues 161 to 198 (SSASTSRGSSSRQSSTAASSSSSANSGARPPPTRSQTN) is disordered.

Belongs to the shisa family. Interacts with fzd8 and fgfr1.

Its subcellular location is the endoplasmic reticulum membrane. Its function is as follows. Plays an essential role in the maturation of presomitic mesoderm cells by individual attenuation of both fgf and wnt signaling. Inhibits both wnt and fgf signaling through the regulation of protein maturation and cell surface transportation of their receptors within the endoplasmic reticulum. In Xenopus laevis (African clawed frog), this protein is Protein shisa-2 (shisa2).